Reading from the N-terminus, the 219-residue chain is uncharacterized protein (219 aa).

This is an uncharacterized protein from Acanthamoeba polyphaga mimivirus (APMV).